Reading from the N-terminus, the 422-residue chain is Lipase member M (422 aa).

The N-terminal stretch at 1–33 (MSEILSRVWTVSHRVEIWLLILVAYLLQRNVNS) is a signal peptide. Residue Asn-48 is glycosylated (N-linked (GlcNAc...) asparagine). In terms of domain architecture, AB hydrolase-1 spans 92 to 392 (PVVLLQHGLL…EWAHVDFIWG (301 aa)). Ser-186 functions as the Nucleophile in the catalytic mechanism. Residues Cys-260 and Cys-269 are joined by a disulfide bond. Residues Asp-357 and His-386 each act as charge relay system in the active site.

Belongs to the AB hydrolase superfamily. Lipase family.

It localises to the secreted. Plays a highly specific role in the last step of keratinocyte differentiation. May have an essential function in lipid metabolism of the most differentiated epidermal layers. The polypeptide is Lipase member M (Lipm) (Mus musculus (Mouse)).